A 232-amino-acid polypeptide reads, in one-letter code: MTNADPHELQKFSDLAHRWWDPNAEFKPLHELNPVRLKWIDSHAHLTGKRVLDIGCGGGILSESMATLGADVKGIDLSNEALGVADLHSLESGVTVNYEEIAAETLAAREPASFDVATCMEMLEHVPDPSKVVEACKTLVKPGGWVFFSTLNRNVKSYLFAVIGAEYVARMLPKGTHDYARFIRPSELAGFARAAGLLTADIKGITYNPLTRDFGLSSDTDVNYMLACRREA.

Residues Arg36, Gly55, Asp76, and Met120 each contribute to the S-adenosyl-L-methionine site.

The protein belongs to the methyltransferase superfamily. UbiG/COQ3 family.

The enzyme catalyses a 3-demethylubiquinol + S-adenosyl-L-methionine = a ubiquinol + S-adenosyl-L-homocysteine + H(+). It carries out the reaction a 3-(all-trans-polyprenyl)benzene-1,2-diol + S-adenosyl-L-methionine = a 2-methoxy-6-(all-trans-polyprenyl)phenol + S-adenosyl-L-homocysteine + H(+). Its pathway is cofactor biosynthesis; ubiquinone biosynthesis. Its function is as follows. O-methyltransferase that catalyzes the 2 O-methylation steps in the ubiquinone biosynthetic pathway. The polypeptide is Ubiquinone biosynthesis O-methyltransferase (Paraburkholderia phymatum (strain DSM 17167 / CIP 108236 / LMG 21445 / STM815) (Burkholderia phymatum)).